Here is a 495-residue protein sequence, read N- to C-terminus: Glycerol kinase (495 aa).

Residue Thr13 participates in ADP binding. Thr13, Thr14, and Ser15 together coordinate ATP. Thr13 contacts sn-glycerol 3-phosphate. Position 17 (Arg17) interacts with ADP. Residues Arg83, Glu84, Tyr135, and Asp244 each coordinate sn-glycerol 3-phosphate. Residues Arg83, Glu84, Tyr135, Asp244, and Gln245 each coordinate glycerol. ADP is bound by residues Thr266 and Gly309. 4 residues coordinate ATP: Thr266, Gly309, Gln313, and Gly410. ADP is bound by residues Gly410 and Asn414.

It belongs to the FGGY kinase family.

The catalysed reaction is glycerol + ATP = sn-glycerol 3-phosphate + ADP + H(+). The protein operates within polyol metabolism; glycerol degradation via glycerol kinase pathway; sn-glycerol 3-phosphate from glycerol: step 1/1. Inhibited by fructose 1,6-bisphosphate (FBP). In terms of biological role, key enzyme in the regulation of glycerol uptake and metabolism. Catalyzes the phosphorylation of glycerol to yield sn-glycerol 3-phosphate. This is Glycerol kinase from Shewanella sediminis (strain HAW-EB3).